Consider the following 461-residue polypeptide: Cytochrome c biogenesis protein CcsB (461 aa).

The next 3 helical transmembrane spans lie at 32-52 (LRLA…GTVI), 91-111 (TWWF…CTFT), and 178-198 (IGPI…IWGA).

This sequence belongs to the Ccs1/CcsB family. In terms of assembly, may interact with CcsA.

It is found in the cellular thylakoid membrane. Its function is as follows. Required during biogenesis of c-type cytochromes (cytochrome c6 and cytochrome f) at the step of heme attachment. This is Cytochrome c biogenesis protein CcsB from Nostoc sp. (strain PCC 7120 / SAG 25.82 / UTEX 2576).